The following is a 312-amino-acid chain: Dihydroorotate dehydrogenase B (NAD(+)), catalytic subunit (312 aa).

Residues Ser23 and 47 to 48 (KA) contribute to the FMN site. Residues Lys47 and 71 to 75 (NAIGL) each bind substrate. Asn103 and Asn131 together coordinate FMN. A substrate-binding site is contributed by Asn131. The active-site Nucleophile is Cys134. Lys171 and Ile197 together coordinate FMN. 198-199 (NT) provides a ligand contact to substrate. FMN is bound by residues Gly223, 249 to 250 (GG), and 271 to 272 (GT).

It belongs to the dihydroorotate dehydrogenase family. Type 1 subfamily. As to quaternary structure, heterotetramer of 2 PyrK and 2 PyrD type B subunits. FMN serves as cofactor.

It is found in the cytoplasm. It carries out the reaction (S)-dihydroorotate + NAD(+) = orotate + NADH + H(+). Its pathway is pyrimidine metabolism; UMP biosynthesis via de novo pathway; orotate from (S)-dihydroorotate (NAD(+) route): step 1/1. Its function is as follows. Catalyzes the conversion of dihydroorotate to orotate with NAD(+) as electron acceptor. The protein is Dihydroorotate dehydrogenase B (NAD(+)), catalytic subunit (pyrDB) of Streptococcus pneumoniae (strain ATCC BAA-255 / R6).